The chain runs to 505 residues: Mannosyl-oligosaccharide alpha-1,2-mannosidase 1B (505 aa).

The first 16 residues, 1-16, serve as a signal peptide directing secretion; it reads MRTLLALAALAGFAAA. 2 N-linked (GlcNAc...) asparagine glycosylation sites follow: N88 and N174. C325 and C354 are oxidised to a cystine. N-linked (GlcNAc...) asparagine glycosylation occurs at N359. Residue E368 is the Proton donor of the active site. T494 is a binding site for Ca(2+).

It belongs to the glycosyl hydrolase 47 family. Monomer. Ca(2+) serves as cofactor. Mg(2+) is required as a cofactor.

The protein resides in the cytoplasmic vesicle lumen. The catalysed reaction is N(4)-(alpha-D-Man-(1-&gt;2)-alpha-D-Man-(1-&gt;2)-alpha-D-Man-(1-&gt;3)-[alpha-D-Man-(1-&gt;2)-alpha-D-Man-(1-&gt;3)-[alpha-D-Man-(1-&gt;2)-alpha-D-Man-(1-&gt;6)]-alpha-D-Man-(1-&gt;6)]-beta-D-Man-(1-&gt;4)-beta-D-GlcNAc-(1-&gt;4)-beta-D-GlcNAc)-L-asparaginyl-[protein] (N-glucan mannose isomer 9A1,2,3B1,2,3) + 4 H2O = N(4)-(alpha-D-Man-(1-&gt;3)-[alpha-D-Man-(1-&gt;3)-[alpha-D-Man-(1-&gt;6)]-alpha-D-Man-(1-&gt;6)]-beta-D-Man-(1-&gt;4)-beta-D-GlcNAc-(1-&gt;4)-beta-D-GlcNAc)-L-asparaginyl-[protein] (N-glucan mannose isomer 5A1,2) + 4 beta-D-mannose. It catalyses the reaction N(4)-(alpha-D-Man-(1-&gt;2)-alpha-D-Man-(1-&gt;2)-alpha-D-Man-(1-&gt;3)-[alpha-D-Man-(1-&gt;3)-[alpha-D-Man-(1-&gt;2)-alpha-D-Man-(1-&gt;6)]-alpha-D-Man-(1-&gt;6)]-beta-D-Man-(1-&gt;4)-beta-D-GlcNAc-(1-&gt;4)-beta-D-GlcNAc)-L-asparaginyl-[protein] (N-glucan mannose isomer 8A1,2,3B1,3) + 3 H2O = N(4)-(alpha-D-Man-(1-&gt;3)-[alpha-D-Man-(1-&gt;3)-[alpha-D-Man-(1-&gt;6)]-alpha-D-Man-(1-&gt;6)]-beta-D-Man-(1-&gt;4)-beta-D-GlcNAc-(1-&gt;4)-beta-D-GlcNAc)-L-asparaginyl-[protein] (N-glucan mannose isomer 5A1,2) + 3 beta-D-mannose. The protein operates within protein modification; protein glycosylation. Its function is as follows. Involved in the maturation of Asn-linked oligosaccharides. Progressively trims alpha-1,2-linked mannose residues from Man(9)GlcNAc(2) to produce Man(5)GlcNAc(2). This is Mannosyl-oligosaccharide alpha-1,2-mannosidase 1B (mns1B) from Emericella nidulans (strain FGSC A4 / ATCC 38163 / CBS 112.46 / NRRL 194 / M139) (Aspergillus nidulans).